Here is a 417-residue protein sequence, read N- to C-terminus: Ankyrin repeat and SAM domain-containing protein 4B (417 aa).

Positions 1 to 252 (MSTRYHQAAS…SGDFKEKLQL (252 aa)) are mediates localization to microvilli. ANK repeat units lie at residues 31 to 60 (DGMTPTLLAAYHGNLEALEIICSRGGDPDR), 64 to 93 (WGNTPLHFAASNGHAHCVSFLVNFGANIFA), and 97 to 126 (DLQTPLDAAASREQNECVALLDKAATAQNI). Residues 130–164 (KKVTRLKEQAQKNARRQIKECERLQEKHQNKMAHT) adopt a coiled-coil conformation. The interval 151–195 (ERLQEKHQNKMAHTYSKEESGTLSSSKGTFSRSSPSNASAPGTFG) is disordered. The span at 171 to 190 (GTLSSSKGTFSRSSPSNASA) shows a compositional bias: polar residues. Residues 253 to 346 (SAEEDGSVHH…EWEEDVVDAT (94 aa)) are mediates interaction with MYO7B. At Ser283 the chain carries Phosphoserine. A disordered region spans residues 305-330 (RQGASEADEGAADEEGEENGLKDDLP). Acidic residues predominate over residues 310-322 (EADEGAADEEGEE). Positions 351-403 (FLLSQHLEEFLPIFKREQIDLEALLLCSDEDLQSIQMQLGPRKKVLNAINRRK) constitute an SAM domain. A PDZ-binding; mediates interaction with USH1C motif is present at residues 415–417 (TSL).

In terms of assembly, part of the IMAC/intermicrovillar adhesion complex/intermicrovillar tip-link complex composed of ANKS4B, MYO7B, USH1C, CDHR2 and CDHR5. Interacts with USH1C; the interaction is direct and is required for ANKS4B localization to the tip of microvilli. Interacts with MYO7B; the interaction is direct. May interact with HSPA5. Expressed in kidney and small intestine.

The protein localises to the cell projection. The protein resides in the microvillus. Functionally, as part of the intermicrovillar adhesion complex/IMAC plays a role in epithelial brush border differentiation, controlling microvilli organization and length. Plays a role in assembly of the complex. May play a role in cellular response to endoplasmic reticulum stress. The chain is Ankyrin repeat and SAM domain-containing protein 4B from Homo sapiens (Human).